We begin with the raw amino-acid sequence, 545 residues long: Carboxypeptidase Y homolog A (545 aa).

An N-terminal signal peptide occupies residues 1–18 (MKSSLALALLVGGAIASG). Residues 19-125 (PQQQVLREPV…RLDTYDLRVK (107 aa)) constitute a propeptide that is removed on maturation. 5 cysteine pairs are disulfide-bonded: Cys-179–Cys-418, Cys-313–Cys-327, Cys-337–Cys-360, Cys-344–Cys-353, and Cys-382–Cys-388. Asn-210 is a glycosylation site (N-linked (GlcNAc...) asparagine). Ser-266 is an active-site residue. Residue Asp-457 is part of the active site. Asn-487 and Asn-507 each carry an N-linked (GlcNAc...) asparagine glycan. His-518 is a catalytic residue.

The protein belongs to the peptidase S10 family.

It is found in the vacuole. The catalysed reaction is Release of a C-terminal amino acid with broad specificity.. Functionally, vacuolar carboxypeptidase involved in degradation of small peptides. Digests preferentially peptides containing an aliphatic or hydrophobic residue in P1' position, as well as methionine, leucine or phenylalanine in P1 position of ester substrate. This Ajellomyces capsulatus (strain NAm1 / WU24) (Darling's disease fungus) protein is Carboxypeptidase Y homolog A (CPYA).